We begin with the raw amino-acid sequence, 611 residues long: Protein Spindly-A (611 aa).

Residues 1 to 390 (MEESETVLKL…KENEKIKDEL (390 aa)) adopt a coiled-coil conformation. Residues 487-611 (TCTAESTDGR…PNATTQCPQQ (125 aa)) form a disordered region. Residues 493–511 (TDGRIHSKEDLSLSTKEQD) are compositionally biased toward basic and acidic residues. Residues 552–567 (HNCSVTSASPRSTSED) are compositionally biased toward polar residues. Basic and acidic residues predominate over residues 570-583 (SESKRFDEEQEKRK). The span at 602-611 (PNATTQCPQQ) shows a compositional bias: polar residues.

It belongs to the Spindly family.

Its subcellular location is the chromosome. The protein localises to the centromere. The protein resides in the kinetochore. Its function is as follows. Required for the localization of dynein and dynactin to the mitotic kintochore. Dynein is believed to control the initial lateral interaction between the kinetochore and spindle microtubules and to facilitate the subsequent formation of end-on kinetochore-microtubule attachments mediated by the NDC80 complex. The sequence is that of Protein Spindly-A (spdl1-a) from Xenopus laevis (African clawed frog).